Consider the following 486-residue polypeptide: MDQEESHVISIFETVGAYFINIFYNFLYKNALYKKHSIVMEYQYQVKGYILGVKQNKKLYEKMLDSFYKYFCNITQINSKTLNFSNFVSTIVDSFLPKEYSQSISLEKKDSILELLLCDYISNLGTFITTEKMLPFIVKNRKENYHKVTKEMQDYSLTFLLKKRMELYNKFLRKQAYVEPETELEETYARLSSYNRSLLYQIEELTSEKKSFLEELSTLRKKYEKRQSEYRRLVQLLYQQIQRSSSSKTSYPLTKFIETLPSEHFSNEEYQKEASADQKVILREQEETELLREQELLASQEVTSKSPNNYPVPQSRTIVNKPSDNYPVPRSRSTKIDFDNSLQKQELHAKNGFSEKAIVEFNQDKQPMFKEEAIVEFNQDKPEIKEETIVEFNQNKQPMFKEEAILEFNQDKQPEFKETILDNKEILDNKEDILEEENQDEPIVQNPFLENFWKPEQKTFNQSGLFEESSDFSNDWSGGDVTLNFS.

A helical membrane pass occupies residues 7 to 28 (HVISIFETVGAYFINIFYNFLY). N-linked (GlcNAc...) asparagine; by host glycosylation is found at Asn73, Asn83, and Asn195. A coiled-coil region spans residues 183 to 233 (ELEETYARLSSYNRSLLYQIEELTSEKKSFLEELSTLRKKYEKRQSEYRRL). Residues 299 to 329 (SQEVTSKSPNNYPVPQSRTIVNKPSDNYPVP) are disordered. A compositionally biased stretch (polar residues) spans 300–323 (QEVTSKSPNNYPVPQSRTIVNKPS). Asn461 carries N-linked (GlcNAc...) asparagine; by host glycosylation.

It belongs to the asfivirus B475L family.

It localises to the host membrane. This is an uncharacterized protein from Ornithodoros (relapsing fever ticks).